The chain runs to 314 residues: Dioxygenase easH (314 aa).

Fe cation contacts are provided by histidine 141, aspartate 143, and histidine 217.

The protein belongs to the PhyH family. In terms of assembly, homodimer. The cofactor is Fe cation.

Its pathway is alkaloid biosynthesis; ergot alkaloid biosynthesis. Dioxygenase; part of the gene cluster that mediates the biosynthesis of fungal ergot alkaloid. DmaW catalyzes the first step of ergot alkaloid biosynthesis by condensing dimethylallyl diphosphate (DMAP) and tryptophan to form 4-dimethylallyl-L-tryptophan. The second step is catalyzed by the methyltransferase easF that methylates 4-dimethylallyl-L-tryptophan in the presence of S-adenosyl-L-methionine, resulting in the formation of 4-dimethylallyl-L-abrine. The catalase easC and the FAD-dependent oxidoreductase easE then transform 4-dimethylallyl-L-abrine to chanoclavine-I which is further oxidized by easD in the presence of NAD(+), resulting in the formation of chanoclavine-I aldehyde. Agroclavine dehydrogenase easG then mediates the conversion of chanoclavine-I aldehyde to agroclavine via a non-enzymatic adduct reaction: the substrate is an iminium intermediate that is formed spontaneously from chanoclavine-I aldehyde in the presence of glutathione. The presence of easA is not required to complete this reaction. Further conversion of agroclavine to paspalic acid is a two-step process involving oxidation of agroclavine to elymoclavine and of elymoclavine to paspalic acid, the second step being performed by the elymoclavine oxidase cloA. Paspalic acid is then further converted to D-lysergic acid. Ergopeptines are assembled from D-lysergic acid and three different amino acids by the D-lysergyl-peptide-synthetases composed each of a monomudular and a trimodular nonribosomal peptide synthetase subunit. LpsB and lpsC encode the monomodular subunits responsible for D-lysergic acid activation and incorporation into the ergopeptine backbone. LpsA1 and A2 subunits encode the trimodular nonribosomal peptide synthetase assembling the tripeptide portion of ergopeptines. LpsA1 is responsible for formation of the major ergopeptine, ergotamine, and lpsA2 for alpha-ergocryptine, the minor ergopeptine of the total alkaloid mixture elaborated by C.purpurea. D-lysergyl-tripeptides are assembled by the nonribosomal peptide synthetases and released as N-(D-lysergyl-aminoacyl)-lactams. Cyclolization of the D-lysergyl-tripeptides is performed by the Fe(2+)/2-ketoglutarate-dependent dioxygenase easH which introduces a hydroxyl group into N-(D-lysergyl-aminoacyl)-lactam at alpha-C of the aminoacyl residue followed by spontaneous condensation with the terminal lactam carbonyl group. The chain is Dioxygenase easH from Claviceps purpurea (strain 20.1) (Ergot fungus).